A 600-amino-acid chain; its full sequence is Adenine deaminase 2 (600 aa).

The protein belongs to the metallo-dependent hydrolases superfamily. Adenine deaminase family. Mn(2+) is required as a cofactor.

It catalyses the reaction adenine + H2O + H(+) = hypoxanthine + NH4(+). In Bradyrhizobium sp. (strain ORS 278), this protein is Adenine deaminase 2.